Consider the following 204-residue polypeptide: Holliday junction branch migration complex subunit RuvA (204 aa).

The interval 1–64 (MIGRLRGVVI…EDAQLLYGFN (64 aa)) is domain I. The tract at residues 65–143 (HKQERALFRE…GWVSHDLFSP (79 aa)) is domain II. Positions 144-155 (AEISLPARESVL) are flexible linker. Positions 156–204 (RAPDSSEEAASALVALGYKPQQASQIVSKIAKEGMSVEDIIRESLRSLV) are domain III.

This sequence belongs to the RuvA family. As to quaternary structure, homotetramer. Forms an RuvA(8)-RuvB(12)-Holliday junction (HJ) complex. HJ DNA is sandwiched between 2 RuvA tetramers; dsDNA enters through RuvA and exits via RuvB. An RuvB hexamer assembles on each DNA strand where it exits the tetramer. Each RuvB hexamer is contacted by two RuvA subunits (via domain III) on 2 adjacent RuvB subunits; this complex drives branch migration. In the full resolvosome a probable DNA-RuvA(4)-RuvB(12)-RuvC(2) complex forms which resolves the HJ.

It localises to the cytoplasm. In terms of biological role, the RuvA-RuvB-RuvC complex processes Holliday junction (HJ) DNA during genetic recombination and DNA repair, while the RuvA-RuvB complex plays an important role in the rescue of blocked DNA replication forks via replication fork reversal (RFR). RuvA specifically binds to HJ cruciform DNA, conferring on it an open structure. The RuvB hexamer acts as an ATP-dependent pump, pulling dsDNA into and through the RuvAB complex. HJ branch migration allows RuvC to scan DNA until it finds its consensus sequence, where it cleaves and resolves the cruciform DNA. The polypeptide is Holliday junction branch migration complex subunit RuvA (Aeromonas salmonicida (strain A449)).